Consider the following 131-residue polypeptide: Histone H2B.2 (131 aa).

A compositionally biased stretch (basic and acidic residues) spans 1–19 (MSSAAEKKPASKAPAEKKP). The segment at 1–37 (MSSAAEKKPASKAPAEKKPAAKKTSTSVDGKKRSKVR) is disordered. N6-acetyllysine; alternate is present on residues Lys7 and Lys8. Residues Lys7 and Lys8 each participate in a glycyl lysine isopeptide (Lys-Gly) (interchain with G-Cter in SUMO); alternate cross-link. Phosphoserine is present on Ser11. An N6-acetyllysine modification is found at Lys12. Lys17, Lys18, Lys22, and Lys23 each carry N6-acetyllysine; alternate. Residues Lys17 and Lys18 each participate in a glycyl lysine isopeptide (Lys-Gly) (interchain with G-Cter in SUMO); alternate cross-link. Lys22 bears the N6-butyryllysine; alternate mark. Lys23 carries the post-translational modification N6-methyllysine; alternate. The residue at position 35 (Lys35) is an N6-succinyllysine. An N6,N6-dimethyllysine modification is found at Lys38. Lys47 carries the post-translational modification N6-succinyllysine. Lys124 participates in a covalent cross-link: Glycyl lysine isopeptide (Lys-Gly) (interchain with G-Cter in ubiquitin).

Belongs to the histone H2B family. The nucleosome is a histone octamer containing two molecules each of H2A, H2B, H3 and H4 assembled in one H3-H4 heterotetramer and two H2A-H2B heterodimers. The octamer wraps approximately 147 bp of DNA. Interacts with NAP1. Monoubiquitinated by the RAD6/UBC2-BRE1 complex to form H2BK123ub1. H2BK123ub1 gives a specific tag for epigenetic transcriptional activation and is also prerequisite for H3K4me and H3K79me formation. H2BK123ub1 also modulates the formation of double-strand breaks during meiosis and is a prerequisite for DNA-damage checkpoint activation. Deubiquitination is performed by UBP8 in presence of SGF11. Post-translationally, phosphorylated by STE20 to form H2BS10ph during progression through meiotic prophase. May be correlated with chromosome condensation. H2BS10ph is also formed after H(2)O(2) treatment, and is a step leading to apoptosis. In terms of processing, acetylated by GCN5, a component of the SAGA complex, to form H2BK11ac and H2BK16ac. H2BK16ac can also be formed by ESA1, a component of the NuA4 histone acetyltransferase (HAT) complex. Acetylation of N-terminal lysines and particularly formation of H2BK11acK16ac has a positive effect on transcription. Sumoylation to form H2BK6su or H2BK7su, and probably also H2BK16su or H2BK17su, occurs preferentially near the telomeres and represses gene transcription.

The protein localises to the nucleus. Its subcellular location is the chromosome. Core component of nucleosome. Nucleosomes wrap and compact DNA into chromatin, limiting DNA accessibility to the cellular machineries which require DNA as a template. Histones thereby play a central role in transcription regulation, DNA repair, DNA replication and chromosomal stability. DNA accessibility is regulated via a complex set of post-translational modifications of histones, also called histone code, and nucleosome remodeling. In Saccharomyces cerevisiae (strain ATCC 204508 / S288c) (Baker's yeast), this protein is Histone H2B.2 (HTB2).